The chain runs to 613 residues: Kelch-like protein 36 (613 aa).

A BTB domain is found at 45 to 112 (CDVVLVVEEQ…LYSSELELDG (68 aa)). The BACK domain occupies 147–249 (YLYLQELASI…PEDILLQRVK (103 aa)). Kelch repeat units lie at residues 294 to 343 (CLLF…VLGG), 344 to 395 (FIFI…SIED), 396 to 442 (MLVA…IYKD), 444 to 491 (VYIS…SLGD), 492 to 544 (SIYS…VWQG), and 545 to 593 (RIYI…VCAL).

In terms of assembly, interacts with CUL3.

Its pathway is protein modification; protein ubiquitination. Its function is as follows. Probable substrate-specific adapter of an E3 ubiquitin-protein ligase complex which mediates the ubiquitination and subsequent proteasomal degradation of target proteins. The chain is Kelch-like protein 36 (Klhl36) from Mus musculus (Mouse).